Consider the following 111-residue polypeptide: Protein YibV (111 aa).

In Escherichia coli O157:H7, this protein is Protein YibV (yibV).